Here is a 451-residue protein sequence, read N- to C-terminus: Tubulin alpha-1 chain (451 aa).

Glutamine 11 is a binding site for GTP. N6-acetyllysine is present on lysine 40. Glutamate 71, glycine 144, threonine 145, threonine 179, asparagine 206, and asparagine 228 together coordinate GTP. Glutamate 71 is a Mg(2+) binding site. Glutamate 254 is an active-site residue.

Belongs to the tubulin family. In terms of assembly, dimer of alpha and beta chains. A typical microtubule is a hollow water-filled tube with an outer diameter of 25 nm and an inner diameter of 15 nM. Alpha-beta heterodimers associate head-to-tail to form protofilaments running lengthwise along the microtubule wall with the beta-tubulin subunit facing the microtubule plus end conferring a structural polarity. Microtubules usually have 13 protofilaments but different protofilament numbers can be found in some organisms and specialized cells. Mg(2+) serves as cofactor. In terms of processing, undergoes a tyrosination/detyrosination cycle, the cyclic removal and re-addition of a C-terminal tyrosine residue by the enzymes tubulin tyrosine carboxypeptidase (TTCP) and tubulin tyrosine ligase (TTL), respectively. Post-translationally, acetylation of alpha chains at Lys-40 stabilizes microtubules and affects affinity and processivity of microtubule motors. This modification has a role in multiple cellular functions, ranging from cell motility, cell cycle progression or cell differentiation to intracellular trafficking and signaling.

Its subcellular location is the cytoplasm. The protein resides in the cytoskeleton. The enzyme catalyses GTP + H2O = GDP + phosphate + H(+). Its function is as follows. Tubulin is the major constituent of microtubules, a cylinder consisting of laterally associated linear protofilaments composed of alpha- and beta-tubulin heterodimers. Microtubules grow by the addition of GTP-tubulin dimers to the microtubule end, where a stabilizing cap forms. Below the cap, tubulin dimers are in GDP-bound state, owing to GTPase activity of alpha-tubulin. The polypeptide is Tubulin alpha-1 chain (TUBA1) (Chlamydomonas reinhardtii (Chlamydomonas smithii)).